The primary structure comprises 382 residues: Innexin-8 (382 aa).

The next 4 helical transmembrane spans lie at 29 to 49 (LITA…TYVG), 103 to 123 (QWSS…KFLW), 187 to 207 (VIKI…AIFL), and 270 to 290 (IFLF…IAHF).

Belongs to the pannexin family.

It is found in the cell membrane. It localises to the cell junction. Its subcellular location is the gap junction. Structural component of the gap junctions. In Caenorhabditis elegans, this protein is Innexin-8 (inx-8).